A 492-amino-acid chain; its full sequence is UPF0652 protein C22H10.08 (492 aa).

This sequence belongs to the UPF0652 family.

Its subcellular location is the cytoplasm. The protein resides in the nucleus. The polypeptide is UPF0652 protein C22H10.08 (Schizosaccharomyces pombe (strain 972 / ATCC 24843) (Fission yeast)).